Reading from the N-terminus, the 1493-residue chain is Myosin-13 (1493 aa).

In terms of domain architecture, Myosin N-terminal SH3-like spans 18-67; it reads KVGSIVWVQDPEEAWIDGEVVEVNGEDIKVQCTSGKTVVAKGSNTYPKDM. The region spanning 72-741 is the Myosin motor domain; that stretch reads SGVDDMTTLA…QMAELDDRRT (670 aa). Residues 166-173 and 219-227 each bind ATP; these read GESGAGKT and NNNSSRFGK. Actin-binding stretches follow at residues 504–538, 540–563, 598–622, and 622–644; these read LIEK…YETL, DNKY…AGDV, FPPL…KQQL, and LASL…KPNN. IQ domains follow at residues 744–773, 767–796, 792–821, 813–842, 836–865, and 859–888; these read LGRA…AAIN, LRNA…EAAA, REAA…VTVQ, YIEA…ATTV, KTKA…AAIT, and LKKA…DARD. Residues 889-1057 adopt a coiled-coil conformation; it reads TVVLQAAKSM…NFLKESVLTT (169 aa). A disordered region spans residues 1085-1114; sequence QLSGAEFTTPPRIQESGSDTKSRGSHIDPQ. Residues 1102–1114 show a composition bias toward basic and acidic residues; sequence SDTKSRGSHIDPQ. In terms of domain architecture, Dilute spans 1161 to 1444; sequence DRLVQMIGSA…IASMTGVMTD (284 aa).

Belongs to the TRAFAC class myosin-kinesin ATPase superfamily. Myosin family. Plant myosin class XI subfamily. As to quaternary structure, homodimer.

In terms of biological role, myosin heavy chain that is required for the cell cycle-regulated transport of various organelles and proteins for their segregation. Functions by binding with its tail domain to receptor proteins on organelles and exerting force with its N-terminal motor domain against actin filaments, thereby transporting its cargo along polarized actin cables. This is Myosin-13 (XI-G) from Arabidopsis thaliana (Mouse-ear cress).